The chain runs to 306 residues: Uricase (306 aa).

Catalysis depends on charge relay system residues Lys-5 and Thr-65. Thr-65, Asp-66, Phe-175, Arg-192, Ile-240, Gln-241, and Asn-267 together coordinate urate. The disordered stretch occupies residues 281–306; the sequence is AKVLREPPRPTGYQQFSMDRSDLEEQ.

It belongs to the uricase family.

The enzyme catalyses urate + O2 + H2O = 5-hydroxyisourate + H2O2. The protein operates within purine metabolism; urate degradation; (S)-allantoin from urate: step 1/3. In terms of biological role, catalyzes the oxidation of uric acid to 5-hydroxyisourate, which is further processed to form (S)-allantoin. The protein is Uricase of Halalkalicoccus jeotgali (strain DSM 18796 / CECT 7217 / JCM 14584 / KCTC 4019 / B3).